We begin with the raw amino-acid sequence, 597 residues long: Kelch-like protein 21 (597 aa).

One can recognise a BTB domain in the interval 35-103; it reads LDVTLEAAGG…SYTGRVAVSG (69 aa). One can recognise a BACK domain in the interval 138–239; it reads CLDMQDFAEA…RRFYLLAHVE (102 aa). Kelch repeat units follow at residues 287-335, 336-382, 384-422, 423-470, 472-512, and 513-560; these read ILVL…ALGN, DIYV…VLDG, LYVV…ACRG, RLYA…TLNG, MYFV…VLGG, and KLYV…SIFR. Positions 570 to 597 are disordered; the sequence is GRGFELDSGSDDMDPGRPRPPRDPDELH. A compositionally biased stretch (basic and acidic residues) spans 583-597; that stretch reads DPGRPRPPRDPDELH.

As to quaternary structure, component of the BCR(KLHL21) E3 ubiquitin ligase complex, at least composed of CUL3, KLHL21 and RBX1.

It localises to the cytoplasm. It is found in the cytoskeleton. Its subcellular location is the spindle. Its pathway is protein modification; protein ubiquitination. Substrate-specific adapter of a BCR (BTB-CUL3-RBX1) E3 ubiquitin-protein ligase complex required for efficient chromosome alignment and cytokinesis. The BCR(KLHL21) E3 ubiquitin ligase complex regulates localization of the chromosomal passenger complex (CPC) from chromosomes to the spindle midzone in anaphase and mediates the ubiquitination of AURKB. Ubiquitination of AURKB by BCR(KLHL21) E3 ubiquitin ligase complex may not lead to its degradation by the proteasome. The sequence is that of Kelch-like protein 21 (KLHL21) from Homo sapiens (Human).